Reading from the N-terminus, the 233-residue chain is 2-C-methyl-D-erythritol 4-phosphate cytidylyltransferase (233 aa).

It belongs to the IspD/TarI cytidylyltransferase family. IspD subfamily.

It carries out the reaction 2-C-methyl-D-erythritol 4-phosphate + CTP + H(+) = 4-CDP-2-C-methyl-D-erythritol + diphosphate. The protein operates within isoprenoid biosynthesis; isopentenyl diphosphate biosynthesis via DXP pathway; isopentenyl diphosphate from 1-deoxy-D-xylulose 5-phosphate: step 2/6. In terms of biological role, catalyzes the formation of 4-diphosphocytidyl-2-C-methyl-D-erythritol from CTP and 2-C-methyl-D-erythritol 4-phosphate (MEP). In Vibrio atlanticus (strain LGP32) (Vibrio splendidus (strain Mel32)), this protein is 2-C-methyl-D-erythritol 4-phosphate cytidylyltransferase.